The primary structure comprises 133 residues: Small ribosomal subunit protein uS11 (133 aa).

A disordered region spans residues 114–133 (VTPIPHDGTRPPGGKRGRRV).

This sequence belongs to the universal ribosomal protein uS11 family. In terms of assembly, part of the 30S ribosomal subunit.

Its function is as follows. Located on the platform of the 30S subunit. The protein is Small ribosomal subunit protein uS11 of Archaeoglobus fulgidus (strain ATCC 49558 / DSM 4304 / JCM 9628 / NBRC 100126 / VC-16).